A 215-amino-acid chain; its full sequence is Large ribosomal subunit protein uL3 (215 aa).

The segment at 136-155 (GVSISHRSHGSTGQRQDPGK) is disordered. N5-methylglutamine is present on Q151.

This sequence belongs to the universal ribosomal protein uL3 family. As to quaternary structure, part of the 50S ribosomal subunit. Forms a cluster with proteins L14 and L19. Post-translationally, methylated by PrmB.

Its function is as follows. One of the primary rRNA binding proteins, it binds directly near the 3'-end of the 23S rRNA, where it nucleates assembly of the 50S subunit. This Rickettsia conorii (strain ATCC VR-613 / Malish 7) protein is Large ribosomal subunit protein uL3.